The sequence spans 837 residues: Outer membrane usher protein HifC (837 aa).

Residues 1–26 (MKTKNFPLNKIAFACTLLLANPVAWA) form the signal peptide. A disulfide bridge links C813 with C833.

The protein belongs to the fimbrial export usher family.

The protein resides in the cell outer membrane. Essential for piliation. This Haemophilus influenzae protein is Outer membrane usher protein HifC (hifC).